We begin with the raw amino-acid sequence, 712 residues long: BTB/POZ domain-containing protein 18 (712 aa).

The BTB domain maps to 34 to 102 (CDVLLQAEGE…LYTSEMEVSQ (69 aa)). Disordered regions lie at residues 157–176 (VTPS…PCPL), 212–355 (RACP…EGQV), and 374–410 (ETPL…QEMS). Residues 218–228 (QEKNSSPSSHS) are compositionally biased toward polar residues. Over residues 229 to 238 (QEPRENKNDT) the composition is skewed to basic and acidic residues. The segment covering 277 to 288 (SKPSSILSGSSS) has biased composition (low complexity). Residues 303–313 (VNKETPEDKPK) are compositionally biased toward basic and acidic residues. Polar residues predominate over residues 396–410 (PSGTQPFSSNEQEMS). Residues serine 420, serine 671, and serine 672 each carry the phosphoserine modification. Disordered stretches follow at residues 653–676 (KAGK…EEEE) and 691–712 (TTVP…DILT). Acidic residues predominate over residues 702–712 (SESETEVDILT).

The protein localises to the nucleus. Specifically required during spermatogenesis to promote expression of piRNA precursors. The piRNA metabolic process mediates the repression of transposable elements during meiosis by forming complexes composed of piRNAs and Piwi proteins and governs the methylation and subsequent repression of transposons, which is essential for the germline integrity. Acts by facilitating transcription elongation at piRNA loci during pachytene. This chain is BTB/POZ domain-containing protein 18, found in Homo sapiens (Human).